Here is a 607-residue protein sequence, read N- to C-terminus: BTB/POZ domain-containing protein DOT3 (607 aa).

Residues 52-121 (TDLSIQVNDI…CYNLPLDLNP (70 aa)) form the BTB domain. Residues 211-487 (RCLYNDIATL…VQINTQVLFS (277 aa)) enclose the NPH3 domain. Tyr428 carries the post-translational modification Phosphotyrosine. Disordered stretches follow at residues 498–520 (DKLP…SRDN) and 573–607 (KSFQ…MSMS). 2 stretches are compositionally biased toward basic and acidic residues: residues 499-520 (KLPE…SRDN) and 577-586 (TKREDEETRE). The stretch at 511 to 563 (REDKRMSRDNEIIKTLKEELENVKKKMSELQSDYNELQQEYERLSSKQKSSHN) forms a coiled coil.

It belongs to the NPH3 family. As to expression, expressed in emerging leaf primordia.

It participates in protein modification; protein ubiquitination. May act as a substrate-specific adapter of an E3 ubiquitin-protein ligase complex (CUL3-RBX1-BTB) which mediates the ubiquitination and subsequent proteasomal degradation of target proteins. Involved in leaf vasculature patterning. The chain is BTB/POZ domain-containing protein DOT3 from Arabidopsis thaliana (Mouse-ear cress).